The sequence spans 129 residues: Sigma factor-binding protein Crl (129 aa).

The segment at Thr99 to Val119 is essential for activity.

This sequence belongs to the Crl family.

The protein localises to the cytoplasm. Its function is as follows. Binds to the sigma-S subunit of RNA polymerase, activating expression of sigma-S-regulated genes. Stimulates RNA polymerase holoenzyme formation and may bind to several other sigma factors, such as sigma-70 and sigma-32. This chain is Sigma factor-binding protein Crl, found in Vibrio vulnificus (strain CMCP6).